A 264-amino-acid chain; its full sequence is Type 1 encapsulin shell protein (264 aa).

Belongs to the encapsulin family. Family 1 subfamily. As to quaternary structure, forms hollow shells composed of 60 subunits. Monomers probably form pentamers which assemble into the shell. There are 12 pores where the pentamers meet as well as 3-fold axis channels and dimer channels; none are larger than 3-4 Angstroms in diameter. The N-terminus of the protein is inside the shell, the C-terminus is outside.

Its subcellular location is the encapsulin nanocompartment. Shell component of a type 1 encapsulin nanocompartment. Assembles into proteinaceous shells 21-24 nm in diameter. Empty organelles can be expressed in E.coli. Cargo proteins (DypB) are targeted to the interior via their C-terminal extensions. In Rhodococcus erythropolis (strain PR4 / NBRC 100887), this protein is Type 1 encapsulin shell protein.